Consider the following 784-residue polypeptide: Lon protease (784 aa).

Residues 11-204 (IPVLPLRDVV…YLMAMMESEI (194 aa)) form the Lon N-terminal domain. An ATP-binding site is contributed by 356–363 (GPPGVGKT). The region spanning 592-773 (ENRVGQVTGL…EEVLTLALQN (182 aa)) is the Lon proteolytic domain. Active-site residues include serine 679 and lysine 722.

It belongs to the peptidase S16 family. As to quaternary structure, homohexamer. Organized in a ring with a central cavity. ATP binding and hydrolysis do not affect the oligomeric state of the enzyme.

Its subcellular location is the cytoplasm. It catalyses the reaction Hydrolysis of proteins in presence of ATP.. Contains an allosteric site (distinct from its active site), whose occupancy by an unfolded polypeptide leads to enzyme activation. Its function is as follows. ATP-dependent serine protease that mediates the selective degradation of mutant and abnormal proteins as well as certain short-lived regulatory proteins. Required for cellular homeostasis and for survival from DNA damage and developmental changes induced by stress. Degrades polypeptides processively to yield small peptide fragments that are 5 to 10 amino acids long. Binds to DNA in a double-stranded, site-specific manner. Endogenous substrates include the regulatory proteins RcsA and SulA, the transcriptional activator SoxS, and UmuD. Its overproduction specifically inhibits translation through at least two different pathways, one of them being the YoeB-YefM toxin-antitoxin system. This chain is Lon protease, found in Escherichia coli O6:H1 (strain CFT073 / ATCC 700928 / UPEC).